The sequence spans 25 residues: Arginine attenuator peptide (25 aa).

This sequence belongs to the arginine attenuator peptide family.

Its function is as follows. Arginine attenuator peptide (AAP) that has a regulatory role in the production of arginine-specific carbamoyl phosphate synthetase. Encoded by an upstream open reading frame (uORF) within the 5'-leader region of arginine-specific carbamoyl phosphate synthetase small chain (CPA1) mRNA, it attenuates the translation of the downstream CPA1 ORF. In the presence of high concentrations of arginine, ribosomes translating the uORF encoding AAP stall at the termination codon, resulting in reduced translation from the downstream CPA1 initiation codon. The chain is Arginine attenuator peptide from Saccharomyces cerevisiae (strain ATCC 204508 / S288c) (Baker's yeast).